The chain runs to 601 residues: Putative purine permease C1399.01c (601 aa).

The next 12 membrane-spanning stretches (helical) occupy residues 64 to 84 (VPVLLALLLGFQHALAMVGGV), 102 to 122 (TNYLVSAGLISSGIMTLIQIA), 131 to 151 (YYIGTGMLSVLGISFTSVSVA), 179 to 199 (YGAFLATACVCSLLEIFMSFI), 207 to 227 (LFPPIVTGPVVLLIGTSLISS), 264 to 284 (GWGSAQFIGLGFSVFATIIII), 294 to 314 (TTSVVLGLVVGMIISAATGYW), 337 to 357 (IYGPAVLPMLALYIVNMMEAI), 424 to 444 (FFCAVILFFMGLFAKFAAVFV), 450 to 470 (VLGGMTTFLFSSVAVSGIAII), 481 to 501 (FILTASMTLGMGAILVPDWFT), and 522 to 542 (LVMENGFAIGAFISIFLNLIL).

The protein belongs to the nucleobase:cation symporter-2 (NCS2) (TC 2.A.40) family.

The protein resides in the vacuole membrane. The chain is Putative purine permease C1399.01c from Schizosaccharomyces pombe (strain 972 / ATCC 24843) (Fission yeast).